The following is a 383-amino-acid chain: Succinyl-diaminopimelate desuccinylase (383 aa).

H73 contributes to the Zn(2+) binding site. D75 is an active-site residue. D107 contacts Zn(2+). E141 acts as the Proton acceptor in catalysis. E142, E170, and H356 together coordinate Zn(2+).

Belongs to the peptidase M20A family. DapE subfamily. In terms of assembly, homodimer. It depends on Zn(2+) as a cofactor. The cofactor is Co(2+).

It carries out the reaction N-succinyl-(2S,6S)-2,6-diaminopimelate + H2O = (2S,6S)-2,6-diaminopimelate + succinate. It participates in amino-acid biosynthesis; L-lysine biosynthesis via DAP pathway; LL-2,6-diaminopimelate from (S)-tetrahydrodipicolinate (succinylase route): step 3/3. Catalyzes the hydrolysis of N-succinyl-L,L-diaminopimelic acid (SDAP), forming succinate and LL-2,6-diaminopimelate (DAP), an intermediate involved in the bacterial biosynthesis of lysine and meso-diaminopimelic acid, an essential component of bacterial cell walls. The polypeptide is Succinyl-diaminopimelate desuccinylase (Pseudomonas fluorescens (strain ATCC BAA-477 / NRRL B-23932 / Pf-5)).